The primary structure comprises 270 residues: uncharacterized protein (270 aa).

The tract at residues Leu235–Asp270 is disordered. Over residues Ser238 to Glu251 the composition is skewed to acidic residues. Residues Asn255–Asp270 show a composition bias toward low complexity.

This is an uncharacterized protein from Halorubrum sp. PV6 (HRPV-1).